We begin with the raw amino-acid sequence, 157 residues long: 2-C-methyl-D-erythritol 2,4-cyclodiphosphate synthase (157 aa).

2 residues coordinate a divalent metal cation: aspartate 8 and histidine 10. 4-CDP-2-C-methyl-D-erythritol 2-phosphate is bound by residues 8 to 10 and 34 to 35; these read DVH and HS. Histidine 42 is a binding site for a divalent metal cation. 4-CDP-2-C-methyl-D-erythritol 2-phosphate contacts are provided by residues 56–58, 61–65, 132–135, phenylalanine 139, and arginine 142; these read DIG, FPDTD, and TTTE.

This sequence belongs to the IspF family. Homotrimer. It depends on a divalent metal cation as a cofactor.

It catalyses the reaction 4-CDP-2-C-methyl-D-erythritol 2-phosphate = 2-C-methyl-D-erythritol 2,4-cyclic diphosphate + CMP. It functions in the pathway isoprenoid biosynthesis; isopentenyl diphosphate biosynthesis via DXP pathway; isopentenyl diphosphate from 1-deoxy-D-xylulose 5-phosphate: step 4/6. In terms of biological role, involved in the biosynthesis of isopentenyl diphosphate (IPP) and dimethylallyl diphosphate (DMAPP), two major building blocks of isoprenoid compounds. Catalyzes the conversion of 4-diphosphocytidyl-2-C-methyl-D-erythritol 2-phosphate (CDP-ME2P) to 2-C-methyl-D-erythritol 2,4-cyclodiphosphate (ME-CPP) with a corresponding release of cytidine 5-monophosphate (CMP). This Pseudomonas putida (strain W619) protein is 2-C-methyl-D-erythritol 2,4-cyclodiphosphate synthase.